Consider the following 158-residue polypeptide: Transcriptional regulator MraZ (158 aa).

SpoVT-AbrB domains follow at residues 5–50 (IYET…GGVY) and 91–134 (AVEC…SQSE).

Belongs to the MraZ family. Forms oligomers.

The protein resides in the cytoplasm. The protein localises to the nucleoid. The chain is Transcriptional regulator MraZ from Geobacter metallireducens (strain ATCC 53774 / DSM 7210 / GS-15).